The following is a 108-amino-acid chain: Insulin (108 aa).

Residues 1–23 (MALWILLPLLALLILWGPDPAQA) form the signal peptide. Intrachain disulfides connect cysteine 30-cysteine 94 and cysteine 43-cysteine 107. Positions 57–88 (EVEDPQVGQVELGAGPGAGSEQTLALEVARQA) are cleaved as a propeptide — c peptide.

The protein belongs to the insulin family. As to quaternary structure, heterodimer of a B chain and an A chain linked by two disulfide bonds.

Its subcellular location is the secreted. Functionally, insulin decreases blood glucose concentration. It increases cell permeability to monosaccharides, amino acids and fatty acids. It accelerates glycolysis, the pentose phosphate cycle, and glycogen synthesis in liver. This is Insulin (INS) from Rodentia sp.